A 177-amino-acid polypeptide reads, in one-letter code: PBAN-type neuropeptides (177 aa).

The signal sequence occupies residues 1–23 (MIVTGNPVCAIALLLCLVFRASG). The propeptide occupies 24–54 (EYELEMSSGGSNDGRSPSNDFGSCTDGKCTK). The segment at 28-73 (EMSSGGSNDGRSPSNDFGSCTDGKCTKRTTTTQESGISSGMWFGPR) is disordered. Polar residues predominate over residues 31–45 (SGGSNDGRSPSNDFG). Over residues 47 to 59 (CTDGKCTKRTTTT) the composition is skewed to low complexity. Leucine amide is present on L74. The propeptide occupies 78–113 (HKSNEKQQINPEIEMLVNALDQPGMRWTVITIPANE). Residues L124, L154, and L166 each carry the leucine amide modification. Residues 169 to 177 (QSRSVSRKI) constitute a propeptide that is removed on maturation.

It belongs to the pyrokinin family. Pyrokinins (PK) 1 to 4 are expressed in the retrocerebral complex. PK 1 is expressed in central brain, anntennal lobes and abominal ganglia. PK 2 is expressed in optical lobes and in gnathal, thoracic and abdominal ganglia. PK 3 is expressed in optical lobes and in thoracic and abdominal ganglia (at protein level).

The protein resides in the secreted. Pyrokinins mediate visceral muscle contractile activity (myotropic activity). The protein is PBAN-type neuropeptides of Camponotus floridanus (Florida carpenter ant).